The primary structure comprises 270 residues: Putative phosphoenolpyruvate synthase regulatory protein (270 aa).

Position 150 to 157 (150 to 157 (GVSRCGKT)) interacts with ADP.

This sequence belongs to the pyruvate, phosphate/water dikinase regulatory protein family. PSRP subfamily.

It catalyses the reaction [pyruvate, water dikinase] + ADP = [pyruvate, water dikinase]-phosphate + AMP + H(+). It carries out the reaction [pyruvate, water dikinase]-phosphate + phosphate + H(+) = [pyruvate, water dikinase] + diphosphate. Its function is as follows. Bifunctional serine/threonine kinase and phosphorylase involved in the regulation of the phosphoenolpyruvate synthase (PEPS) by catalyzing its phosphorylation/dephosphorylation. This chain is Putative phosphoenolpyruvate synthase regulatory protein, found in Shewanella amazonensis (strain ATCC BAA-1098 / SB2B).